A 534-amino-acid polypeptide reads, in one-letter code: Coiled-coil domain-containing protein 183 (534 aa).

Coiled-coil stretches lie at residues 10–54, 136–209, and 323–396; these read EEQT…NIRR, DASK…DMKI, and LAQR…HSNM.

The sequence is that of Coiled-coil domain-containing protein 183 (CCDC183) from Homo sapiens (Human).